The sequence spans 297 residues: Cell death peptidase (297 aa).

A run of 2 helical transmembrane segments spans residues 61 to 82 (IVLTVASLEYIWAFSNFFWVFT) and 149 to 178 (IFLCAIAWILHHEISHVVLQHPLVTTAFST).

This sequence belongs to the peptidase U49 family.

It localises to the cell membrane. Its function is as follows. Interacts with a short DNA sequence about one-quarter of the way into the major capsid protein gene 23 of T4; general translation inhibition occurs when this late gene of the virus is expressed. This is Cell death peptidase (lit) from Escherichia coli (strain K12).